Here is a 465-residue protein sequence, read N- to C-terminus: D-ornithine/D-lysine decarboxylase (465 aa).

Lys-80 bears the N6-(pyridoxal phosphate)lysine mark. Residues Gly-259 and 307 to 310 (EPGR) contribute to the pyridoxal 5'-phosphate site. Catalysis depends on Cys-387, which acts as the Proton donor. Pyridoxal 5'-phosphate is bound at residue Tyr-422.

The protein belongs to the Orn/Lys/Arg decarboxylase class-II family. In terms of assembly, homodimer. It depends on pyridoxal 5'-phosphate as a cofactor.

The catalysed reaction is D-ornithine + H(+) = putrescine + CO2. It catalyses the reaction D-lysine + H(+) = cadaverine + CO2. Catalyzes the decarboxylation of D-ornithine and D-lysine. Ornithine is likely the physiological substrate. Has no detectable diaminopimelate decarboxylase activity in vitro. In Salmonella typhimurium (strain LT2 / SGSC1412 / ATCC 700720), this protein is D-ornithine/D-lysine decarboxylase.